The chain runs to 2593 residues: Citrinin polyketide synthase (2593 aa).

An N-terminal acylcarrier protein transacylase domain (SAT) region spans residues 70–224; sequence KLLENLNAWI…YVSVIVDQRR (155 aa). Residue Cys-139 is the Nucleophile; for transacylase activity of the active site. His-258 functions as the Proton donor/acceptor; for transacylase activity in the catalytic mechanism. One can recognise a Ketosynthase family 3 (KS3) domain in the interval 391–806; that stretch reads DERIAVIGMA…GSNASMVVTQ (416 aa). Residues Cys-555, His-690, and His-729 each act as for beta-ketoacyl synthase activity in the active site. Residues 906–1191 are malonyl-CoA:ACP transacylase (MAT) domain; the sequence is PDPKPVILCF…VAIWLEAGSN (286 aa). Positions 1291–1424 are N-terminal hotdog fold; the sequence is PKGLTTFVGY…GTITFQAADS (134 aa). The region spanning 1291–1603 is the PKS/mFAS DH domain; it reads PKGLTTFVGY…YQKVSISGIR (313 aa). Positions 1322 to 1601 are product template (PT) domain; sequence LLSGHIMANA…ISYQKVSISG (280 aa). The active-site Proton acceptor; for dehydratase activity is the His-1326. The C-terminal hotdog fold stretch occupies residues 1451-1603; that stretch reads VADDILQGRN…YQKVSISGIR (153 aa). Residue Asp-1508 is the Proton donor; for dehydratase activity of the active site. The disordered stretch occupies residues 1636-1662; sequence VADSPLVDGSSTAVSGTPPTKKAPKAP. Residues 1661 to 1738 form the Carrier domain; it reads APSVDITGKM…SLVECMQRIL (78 aa). Position 1689 is an O-(pantetheine 4'-phosphoryl)serine (Ser-1689). Residues Tyr-1955, His-2067, and Glu-2093 each act as for methyltransferase activity in the active site. The methyltransferase (CMeT) domain stretch occupies residues 1960-2134; the sequence is INAVWIQQAE…ATHWKKILTS (175 aa). Residues 2215–2459 form an NADPH-binding (R) domain region; it reads PAPTGHCVLV…KALPDFDGSL (245 aa).

It depends on pantetheine 4'-phosphate as a cofactor.

Its pathway is mycotoxin biosynthesis. Functionally, non-reducing polyketide synthase; part of the gene cluster that mediates the biosynthesis of the mycotoxin citrinin, a hepato-nephrotoxic compound to humans due to inhibition of respiration complex III. The pathway begins with the synthesis of a keto-aldehyde intermediate by the citrinin PKS (pksCT) from successive condensations of 4 malonyl-CoA units, presumably with a simple acetyl-CoA starter unit. Release of the keto-aldehyde intermediate is consistent with the presence of the C-terminal reductive release domain. Mp11 collaborates with pksCT by catalyzing the hydrolysis of ACP-bound acyl intermediates to free the ACP from stalled intermediates. Mpl2 then catalyzes the oxidation of the C-12 methyl of the ketone intermediate to an alcohol intermediate which is further oxidized by the oxidoreductase mpl7 to produce a bisaldehyde intermediate. The fourth catalytic step is catalyzed by the mpl4 aldehyde dehydrogenase. The final transformation is the reduction of C-3 by mpl6 to provide the chemically stable citrinin nucleus. This Monascus purpureus (Red mold) protein is Citrinin polyketide synthase.